Reading from the N-terminus, the 260-residue chain is DNA repair protein RecO (260 aa).

It belongs to the RecO family.

Functionally, involved in DNA repair and RecF pathway recombination. The polypeptide is DNA repair protein RecO (Levilactobacillus brevis (strain ATCC 367 / BCRC 12310 / CIP 105137 / JCM 1170 / LMG 11437 / NCIMB 947 / NCTC 947) (Lactobacillus brevis)).